Consider the following 819-residue polypeptide: MAKFNTGSNPTEEAATSSRPFKVAGQSSPSGIQSRKNLFDNQGNASPPAGPSSMPKFGTTKPPLAAKPTYEEKPEKEPKPPFLKPTGGSPRFGTQPNSVSRDPEVKVGFLKPVSPKPTSLTKEDSKPVVLRPPGNKLHNLNQESDLKTPGPKPGPAPPVPENELKPGFSKVAGAKSKFMPAAQDTDSKPRFPRHTFGQKPSLSTEDSQEENTSKNVPVQKGSPVQLGAKSKGAPFKPPKEDPEDKDHGAPSSPFPGVVLKPAASRGSPGLSKNFEEKKEDRKTDLAKNIFLNKLNQEEPARFPKAPSKLTAGTPWGQSQEKEGDKNSATPKQKALPPLSVLGPPPPKPNRPPNVDLTRFRKADSANSATKSQTPYSTTSLPPPPPTHPASQPPLPASHPAHPPVPSLPPRNIKPPLDLKHPINDENQDGVMHSDGTGNLEEEQESEGETYEDIDSSKERDKKREKEEKKRLELERKEQKEREKKEQELKKKFKLTGPIQVIHHAKACCDVKGGKNELSFKQGEDIEIIRITDNPEGKWLGRTARGSYGYIKTTAVEIDYDSLKRKKNSLNAVPPRLVEDDQDVYDDVAEQDAPNSHGQSGSGGMFPPPPTDDEIYDGIEEEDDDDGSVPQVDEKTNAWSWGILKMLKGKDDRKKSIREKPKVSESDNNEGSSLPSQHKQLDVGEEVYDDVDASDFPPPPAEMSQGMSVGRAKTEEKDPKKLKKQEKEEKDLRKKFKYDGEIRVLYSTKVASSLTSKKWGARDLQIKPGESLEVIQSTDDTKVLCRNEEGKYGYVLRSYLVDNDGEIYDDIADGCIYDND.

The segment covering Met-1 to Ala-45 has biased composition (polar residues). Residues Met-1–Lys-490 are disordered. Residue Lys-3 is modified to N6-acetyllysine. 2 positions are modified to phosphoserine: Ser-28 and Ser-46. A compositionally biased stretch (basic and acidic residues) spans Thr-69 to Lys-79. Pro residues predominate over residues Gly-150–Pro-160. Ser-222 is subject to Phosphoserine. Composition is skewed to basic and acidic residues over residues Pro-237 to Gly-248 and Asn-273 to Leu-285. Ser-318 is subject to Phosphoserine. Pro residues-rich tracts occupy residues Gly-342 to Pro-351 and Leu-380 to Ile-412. A compositionally biased stretch (acidic residues) spans Leu-439–Ile-453. The residue at position 445 (Ser-445) is a Phosphoserine. Residues Glu-448–Thr-495 adopt a coiled-coil conformation. Positions Asp-454–Lys-489 are enriched in basic and acidic residues. The Nuclear localization signal motif lies at Lys-479 to Lys-493. An SH3 1 domain is found at Gln-499 to Asp-560. At Tyr-559 the chain carries Phosphotyrosine. Phosphoserine occurs at positions 561 and 568. Residues Tyr-584–Val-587 carry the SH2-binding; to LCP2 motif. 2 disordered regions span residues Glu-589–Thr-635 and Lys-649–Glu-728. The segment covering Thr-610–Gly-626 has biased composition (acidic residues). The short motif at Tyr-615 to Ile-618 is the SH2-binding; to FYN element. A compositionally biased stretch (basic and acidic residues) spans Lys-649–Glu-664. Residues Asn-668–His-677 show a composition bias toward polar residues. Residues Val-682–Ala-692 are compositionally biased toward acidic residues. A Phosphotyrosine modification is found at Tyr-687. The Nuclear localization signal motif lies at Arg-710 to Lys-736. Positions Ala-711 to Glu-728 are enriched in basic and acidic residues. An SH3 2 domain is found at Lys-736–Gly-804.

In terms of assembly, part of a complex consisting of SKAP2, FYB1 and PTPNS1. Part of a complex consisting of SKAP2, FYB1 and PIRB. Part of a complex consisting of SKAP1, FYB1 and CLNK. Interacts with CLNK (via its SH2 domain); this interaction allows SKAP1 and FYB1 to recruit FYN to the complex, thus promoting the phosphorylation of CLNK by FYN. Interacts with FYN. Interacts with LCP2. Interacts with SKAP1. Interacts with SKAP2. Interacts with FASLG. Interacts with EVL. Interacts with TMEM47. Interacts with LCK. Post-translationally, T-cell receptor ligation leads to increased tyrosine phosphorylation. As to expression, expressed in hematopoietic tissues such as myeloid and T-cells, spleen and thymus. Not expressed in B-cells, nor in non-lymphoid tissues. FYB-130 is preferentially expressed in mature T-cells compared to FYB-120, whereas thymocytes showed a greater relative amount of FYB-120. Expressed in podocytes.

It localises to the cytoplasm. It is found in the nucleus. The protein localises to the cell junction. Its function is as follows. Acts as an adapter protein of the FYN and LCP2 signaling cascades in T-cells. May play a role in linking T-cell signaling to remodeling of the actin cytoskeleton. Modulates the expression of IL2. Involved in platelet activation. Prevents the degradation of SKAP1 and SKAP2. May be involved in high affinity immunoglobulin epsilon receptor signaling in mast cells. This is FYN-binding protein 1 (Fyb1) from Mus musculus (Mouse).